The sequence spans 331 residues: Protein RecA (331 aa).

66–73 (GPESSGKT) contacts ATP.

This sequence belongs to the RecA family.

The protein localises to the cytoplasm. Can catalyze the hydrolysis of ATP in the presence of single-stranded DNA, the ATP-dependent uptake of single-stranded DNA by duplex DNA, and the ATP-dependent hybridization of homologous single-stranded DNAs. It interacts with LexA causing its activation and leading to its autocatalytic cleavage. This is Protein RecA from Acholeplasma laidlawii.